A 155-amino-acid polypeptide reads, in one-letter code: 2-C-methyl-D-erythritol 2,4-cyclodiphosphate synthase (155 aa).

The a divalent metal cation site is built by Asp8 and His10. 4-CDP-2-C-methyl-D-erythritol 2-phosphate-binding positions include 8 to 10 (DVH) and 34 to 35 (HS). His42 serves as a coordination point for a divalent metal cation. 4-CDP-2-C-methyl-D-erythritol 2-phosphate contacts are provided by residues 56-58 (DIG), 61-65 (FPDSD), 100-106 (AQKPKML), 132-135 (TTEE), Phe139, and Lys142.

Belongs to the IspF family. Homotrimer. The cofactor is a divalent metal cation.

It catalyses the reaction 4-CDP-2-C-methyl-D-erythritol 2-phosphate = 2-C-methyl-D-erythritol 2,4-cyclic diphosphate + CMP. It participates in isoprenoid biosynthesis; isopentenyl diphosphate biosynthesis via DXP pathway; isopentenyl diphosphate from 1-deoxy-D-xylulose 5-phosphate: step 4/6. Functionally, involved in the biosynthesis of isopentenyl diphosphate (IPP) and dimethylallyl diphosphate (DMAPP), two major building blocks of isoprenoid compounds. Catalyzes the conversion of 4-diphosphocytidyl-2-C-methyl-D-erythritol 2-phosphate (CDP-ME2P) to 2-C-methyl-D-erythritol 2,4-cyclodiphosphate (ME-CPP) with a corresponding release of cytidine 5-monophosphate (CMP). The chain is 2-C-methyl-D-erythritol 2,4-cyclodiphosphate synthase from Clostridium botulinum (strain Okra / Type B1).